We begin with the raw amino-acid sequence, 282 residues long: 4-diphosphocytidyl-2-C-methyl-D-erythritol kinase (282 aa).

The active site involves lysine 9. 98-108 (PMGGGLGGGSS) lines the ATP pocket. Aspartate 140 is a catalytic residue.

The protein belongs to the GHMP kinase family. IspE subfamily. As to quaternary structure, homodimer.

It catalyses the reaction 4-CDP-2-C-methyl-D-erythritol + ATP = 4-CDP-2-C-methyl-D-erythritol 2-phosphate + ADP + H(+). It participates in isoprenoid biosynthesis; isopentenyl diphosphate biosynthesis via DXP pathway; isopentenyl diphosphate from 1-deoxy-D-xylulose 5-phosphate: step 3/6. Catalyzes the phosphorylation of the position 2 hydroxy group of 4-diphosphocytidyl-2C-methyl-D-erythritol. In Salmonella paratyphi A (strain ATCC 9150 / SARB42), this protein is 4-diphosphocytidyl-2-C-methyl-D-erythritol kinase.